The following is a 461-amino-acid chain: Bifunctional protein GlmU (461 aa).

The tract at residues Met1 to Arg227 is pyrophosphorylase. UDP-N-acetyl-alpha-D-glucosamine-binding positions include Leu8 to Gly11, Lys22, Gln73, Gly78 to Thr79, Tyr100 to Asp102, Gly137, Glu152, Asn167, and Asn225. Residue Asp102 coordinates Mg(2+). A Mg(2+)-binding site is contributed by Asn225. Residues Arg228 to Arg248 form a linker region. Residues Gly249 to Glu461 are N-acetyltransferase. UDP-N-acetyl-alpha-D-glucosamine is bound by residues Arg332 and Lys350. Residue His362 is the Proton acceptor of the active site. Residues Tyr365 and Asn376 each coordinate UDP-N-acetyl-alpha-D-glucosamine. Acetyl-CoA is bound by residues Ala379, Asn385–Tyr386, Ser404, Ala422, and Arg439.

This sequence in the N-terminal section; belongs to the N-acetylglucosamine-1-phosphate uridyltransferase family. It in the C-terminal section; belongs to the transferase hexapeptide repeat family. Homotrimer. Mg(2+) is required as a cofactor.

It is found in the cytoplasm. It carries out the reaction alpha-D-glucosamine 1-phosphate + acetyl-CoA = N-acetyl-alpha-D-glucosamine 1-phosphate + CoA + H(+). The enzyme catalyses N-acetyl-alpha-D-glucosamine 1-phosphate + UTP + H(+) = UDP-N-acetyl-alpha-D-glucosamine + diphosphate. The protein operates within nucleotide-sugar biosynthesis; UDP-N-acetyl-alpha-D-glucosamine biosynthesis; N-acetyl-alpha-D-glucosamine 1-phosphate from alpha-D-glucosamine 6-phosphate (route II): step 2/2. Its pathway is nucleotide-sugar biosynthesis; UDP-N-acetyl-alpha-D-glucosamine biosynthesis; UDP-N-acetyl-alpha-D-glucosamine from N-acetyl-alpha-D-glucosamine 1-phosphate: step 1/1. It functions in the pathway bacterial outer membrane biogenesis; LPS lipid A biosynthesis. Its function is as follows. Catalyzes the last two sequential reactions in the de novo biosynthetic pathway for UDP-N-acetylglucosamine (UDP-GlcNAc). The C-terminal domain catalyzes the transfer of acetyl group from acetyl coenzyme A to glucosamine-1-phosphate (GlcN-1-P) to produce N-acetylglucosamine-1-phosphate (GlcNAc-1-P), which is converted into UDP-GlcNAc by the transfer of uridine 5-monophosphate (from uridine 5-triphosphate), a reaction catalyzed by the N-terminal domain. The protein is Bifunctional protein GlmU of Methylococcus capsulatus (strain ATCC 33009 / NCIMB 11132 / Bath).